Here is a 356-residue protein sequence, read N- to C-terminus: DNA polymerase IV (356 aa).

A UmuC domain is found at 7–188; sequence IIHIDMDAFY…IPVTKFYGVG (182 aa). D11 and D106 together coordinate Mg(2+). E107 is an active-site residue.

Belongs to the DNA polymerase type-Y family. As to quaternary structure, monomer. Mg(2+) is required as a cofactor.

Its subcellular location is the cytoplasm. It carries out the reaction DNA(n) + a 2'-deoxyribonucleoside 5'-triphosphate = DNA(n+1) + diphosphate. Functionally, poorly processive, error-prone DNA polymerase involved in untargeted mutagenesis. Copies undamaged DNA at stalled replication forks, which arise in vivo from mismatched or misaligned primer ends. These misaligned primers can be extended by PolIV. Exhibits no 3'-5' exonuclease (proofreading) activity. May be involved in translesional synthesis, in conjunction with the beta clamp from PolIII. The protein is DNA polymerase IV of Listeria welshimeri serovar 6b (strain ATCC 35897 / DSM 20650 / CCUG 15529 / CIP 8149 / NCTC 11857 / SLCC 5334 / V8).